A 338-amino-acid polypeptide reads, in one-letter code: Decarboxylase macB (338 aa).

Residues H7, H9, H159, and D283 each coordinate Zn(2+).

It belongs to the metallo-dependent hydrolases superfamily. ACMSD family.

The catalysed reaction is 6-methylsalicylate + H(+) = 3-methylphenol + CO2. Its pathway is secondary metabolite biosynthesis; terpenoid biosynthesis. In terms of biological role, decarboxylase; part of the gene cluster that mediates the biosynthesis of macrophorins, isoprenoid epoxycyclohexenones containing cyclized drimane moieties. The first step of the pathway is the synthesis of 6-methylsalicylic acid (6-MSA) by the polyketide synthase macA. 6-MSA is then converted to m-cresol by the decarboxylase macB. The cytochrome P450 monooxygenase macC then catalyzes the oxidation of m-cresol to toluquinol. Epoxidation of toluquinol is then performed by the short chain dehydrogenase macD, with the help of macE, and a further prenylation by macG leads to 7-deacetoxyyanuthone A. The next step is the hydroxylation of C-22 of 7-deacetoxyyanuthone A by the cytochrome P450 monooxygenase macH to yield 22-deacetylyanuthone A. O-Mevalon transferase macI then attaches mevalon to the hydroxyl group of 22-deacetylyanuthone A to produce yanuthone E. The terpene cyclase macJ catalyzes the cyclization of 22-deacetylyanuthone A to macrophorin A. MacJ is also able to catalyze cyclization of yanuthone E and 7-deacetoxyyanuthone A to their corresponding macrophorins. The macJ products can be further modified by macH and macJ, as well as by the FAD-dependent monooxygenase macF, to produce additional macrophorins, including 4'-oxomacrophorin A, 4'-oxomacrophorin D and 4'-oxomacrophorin E. The chain is Decarboxylase macB from Penicillium terrestre.